The following is a 157-amino-acid chain: Protein Smg (157 aa).

This sequence belongs to the Smg family.

This is Protein Smg from Shigella boydii serotype 4 (strain Sb227).